We begin with the raw amino-acid sequence, 203 residues long: Glycerol-3-phosphate acyltransferase (203 aa).

Transmembrane regions (helical) follow at residues 13–33 (TLACLVFGYLLGSIPFGLILT), 62–82 (LAAATLLFDALKGTAAAAIAS), 88–108 (AGIAAGFAAFLGHLFPVWLSF), 118–138 (IGVLLGLMPVMVLLFAAIWLA), and 159–179 (IALYAAGNGKVAGLFAVMTAI).

Belongs to the PlsY family. In terms of assembly, probably interacts with PlsX.

It localises to the cell inner membrane. The catalysed reaction is an acyl phosphate + sn-glycerol 3-phosphate = a 1-acyl-sn-glycero-3-phosphate + phosphate. The protein operates within lipid metabolism; phospholipid metabolism. In terms of biological role, catalyzes the transfer of an acyl group from acyl-phosphate (acyl-PO(4)) to glycerol-3-phosphate (G3P) to form lysophosphatidic acid (LPA). This enzyme utilizes acyl-phosphate as fatty acyl donor, but not acyl-CoA or acyl-ACP. This Rhizobium meliloti (strain 1021) (Ensifer meliloti) protein is Glycerol-3-phosphate acyltransferase.